We begin with the raw amino-acid sequence, 201 residues long: Recombination protein RecR (201 aa).

The C4-type zinc-finger motif lies at 57–72 (CRYCRNLSDAEVCLLC). The Toprim domain occupies 80 to 175 (QQICVVETPA…QATRLAYGVP (96 aa)).

Belongs to the RecR family.

Its function is as follows. May play a role in DNA repair. It seems to be involved in an RecBC-independent recombinational process of DNA repair. It may act with RecF and RecO. In Dichelobacter nodosus (strain VCS1703A), this protein is Recombination protein RecR.